Consider the following 519-residue polypeptide: Aldehyde dehydrogenase X, mitochondrial (519 aa).

A mitochondrion-targeting transit peptide spans 1-19; the sequence is MLTARLLLPRLLCLQGRTT. Lys-53 is subject to N6-acetyllysine. Lys-54 carries the post-translational modification N6-acetyllysine; alternate. Residue Lys-54 is modified to N6-succinyllysine; alternate. Position 83 is an N6-succinyllysine (Lys-83). An NAD(+)-binding site is contributed by 264 to 269; the sequence is GSTEVG. Glu-287 functions as the Proton acceptor in the catalytic mechanism. Cys-321 acts as the Nucleophile in catalysis. Lys-366, Lys-385, Lys-401, Lys-416, and Lys-428 each carry N6-acetyllysine; alternate. N6-succinyllysine; alternate occurs at positions 366, 385, 401, 416, and 428. Residue Lys-431 is modified to N6-acetyllysine.

Belongs to the aldehyde dehydrogenase family. In terms of assembly, homotetramer.

The protein localises to the mitochondrion matrix. It carries out the reaction an aldehyde + NAD(+) + H2O = a carboxylate + NADH + 2 H(+). Its pathway is alcohol metabolism; ethanol degradation; acetate from ethanol: step 2/2. Functionally, ALDHs play a major role in the detoxification of alcohol-derived acetaldehyde. They are involved in the metabolism of corticosteroids, biogenic amines, neurotransmitters, and lipid peroxidation. The polypeptide is Aldehyde dehydrogenase X, mitochondrial (Aldh1b1) (Mus musculus (Mouse)).